A 175-amino-acid polypeptide reads, in one-letter code: ADP-ribosylation factor 6 (175 aa).

Gly-2 carries the N-myristoyl glycine lipid modification. Residue Lys-3 is the site of N6-myristoyl lysine attachment. GTP contacts are provided by residues Ala-23–Thr-28, Thr-41–Thr-44, Asp-63–Gln-67, Asn-122–Asp-125, and Cys-155–Ala-156.

It belongs to the small GTPase superfamily. Arf family. Interacts (when activated) with GGA1, GGA2 and GGA3; the interaction is required for proper subcellular location of GGA1, GGA2 and GGA3. Interacts with PIP5K1C. Interacts with USP6 (via Rab-GAP TBC domain). Interacts with RAB11FIP3 and RAB11FIP4. Interacts with HERC1. Interacts with ARHGAP21. Interacts with ASAP3; the interaction is stabilized by calcium ions. Interacts with NCS1/FREQ at the plasma membrane. Interacts with TBC1D24. Interacts with ECPAS. Interacts with MICALL1. Interacts with SPAG9 homodimers, forming heterotetramers. Interacts with CYTH3. Interacts with ASAP2. Interacts with UACA. Interacts with KIF23, forming heterodimers and heterotetramers. Interacts with C9orf72. Interacts (GTP-bound form) with TJAP1/PILT. Interacts with PRKAA2. Interacts with CD36 (when palmitoylated); this interaction mediates CD36 transport from the Golgi to the plasma membrane. Interacts with APBB1. As to quaternary structure, (Microbial infection) Interacts with the V.cholerae enterotoxin subunit A1; this causes a conformation change so that the toxin can bind NAD and catalyze the ADP-ribosylation of Gs alpha. In terms of assembly, (Microbial infection) Interacts with EspG from enteropathogenic E.coli. (Microbial infection) Identified in a complex with RAB1A and EspG from enteropathogenic E.coli. As to quaternary structure, (Microbial infection) Interacts with human enterovirus 71 protein VP1. Post-translationally, GTP-bound form is myristoylated on Lys-3 by NMT1 and NMT2, allowing ARF6 to remain on membranes during the GTPase cycle, thereby promoting its activity. GDP-bound inactive form is demyristoylated on Lys-3 by SIRT2 at early endosomes or endocytic recycling compartment to allow its efficient activation by a guanine exchange factor (GEF) after GDP release. As to expression, ubiquitous, with higher levels in heart, substantia nigra, and kidney.

The protein resides in the cytoplasm. The protein localises to the cytosol. It localises to the cell membrane. Its subcellular location is the endosome membrane. It is found in the recycling endosome membrane. The protein resides in the cell projection. The protein localises to the filopodium membrane. It localises to the ruffle. Its subcellular location is the cleavage furrow. It is found in the midbody. The protein resides in the midbody ring. The protein localises to the early endosome membrane. It localises to the golgi apparatus. Its subcellular location is the trans-Golgi network membrane. It carries out the reaction GTP + H2O = GDP + phosphate + H(+). Its activity is regulated as follows. Activation is generally mediated by a guanine exchange factor (GEF), while inactivation through hydrolysis of bound GTP is catalyzed by a GTPase activating protein (GAP). Activated by ASAP3. Inactivated by ACAP1 and ACAP2. Activated by NGF via NTRK1. Activated by PRKAA2 through its C-terminal regulatory domain. GTP-binding protein involved in protein trafficking that regulates endocytic recycling and cytoskeleton remodeling. GTP-bound form plays an important role in the transport of multiple palmitoylated proteins form the Golgi to the plasma membrane. Required for normal completion of mitotic cytokinesis. Plays a role in the reorganization of the actin cytoskeleton and the formation of stress fibers. Involved in the regulation of dendritic spine development, contributing to the regulation of dendritic branching and filopodia extension. Potentiates the neurite outgrowth in primary neurons by interacting with the molecular adapter APBB1. Plays an important role in membrane trafficking, during junctional remodeling and epithelial polarization. Regulates surface levels of adherens junction proteins such as CDH1. Required for NTRK1 sorting to the recycling pathway from early endosomes. Functionally, (Microbial infection) Functions as an allosteric activator of the cholera toxin catalytic subunit, an ADP-ribosyltransferase. Its function is as follows. (Microbial infection) Plays a key role in the endocytosis of enterovirus 71 and thus viral entry into brain microvascular endothelial cells. In Homo sapiens (Human), this protein is ADP-ribosylation factor 6.